Consider the following 296-residue polypeptide: NAD kinase (296 aa).

Residue Asp-73 is the Proton acceptor of the active site. NAD(+) contacts are provided by residues 73 to 74 (DG), Lys-78, 151 to 152 (NE), Arg-178, Asp-180, and 191 to 196 (TAHAMS).

It belongs to the NAD kinase family. The cofactor is a divalent metal cation.

Its subcellular location is the cytoplasm. The enzyme catalyses NAD(+) + ATP = ADP + NADP(+) + H(+). In terms of biological role, involved in the regulation of the intracellular balance of NAD and NADP, and is a key enzyme in the biosynthesis of NADP. Catalyzes specifically the phosphorylation on 2'-hydroxyl of the adenosine moiety of NAD to yield NADP. The sequence is that of NAD kinase from Francisella tularensis subsp. tularensis (strain WY96-3418).